Consider the following 307-residue polypeptide: NAD kinase 1 (307 aa).

The active-site Proton acceptor is the D67. NAD(+) contacts are provided by residues 67–68 (DG), 149–150 (ND), R179, and D181.

It belongs to the NAD kinase family. It depends on a divalent metal cation as a cofactor.

It is found in the cytoplasm. The catalysed reaction is NAD(+) + ATP = ADP + NADP(+) + H(+). Its function is as follows. Involved in the regulation of the intracellular balance of NAD and NADP, and is a key enzyme in the biosynthesis of NADP. Catalyzes specifically the phosphorylation on 2'-hydroxyl of the adenosine moiety of NAD to yield NADP. This chain is NAD kinase 1, found in Prochlorococcus marinus (strain SARG / CCMP1375 / SS120).